The sequence spans 349 residues: MDLDQLDLNPRITAAVKRGRLKSVKEILCYSGPDLQRLTGLPSHDVQCLLRAASLHLRGSRVLSALHLFQQKESFPEQHQRLSLGCPVLDQFLGGGLPLEGITGLAGCSSAGKTQLALQLCLAVQFPRQYGGLEAGAVYICTEDAFPSKRLWQLIAQQRRLRTDAPEELIEKIRFSNHIFIEHAADVDTLLECVSKKVPILLSRGMARLVVVDSIAAPFRCEFHLQASAIRAKLLLSLGATLRRLSSTFRSPVLCINQVTDMVEDQQSVSRSLGASEERLSPALGITWANQLLMRLMVDRTHEDDVTTGLPRSPVRTLRVLFAPHLPLSSCCYTVSGEGIRGMPGTQSY.

Met-1 is modified (N-acetylmethionine). Residue 107-114 (GCSSAGKT) coordinates ATP.

It belongs to the RecA family. RAD51 subfamily. Interacts with RAD51C and RAD51. Part of the CX3 complex consisting of RAD51C and XRCC3; the complex has a ring-like structure arranged into a flat disc around a central channel; CX3 can interact with RAD51 in vitro. Forms a complex with FANCD2, BRCA2 and phosphorylated FANCG. Interacts with SWSAP1 and ZSWIM7; involved in homologous recombination repair. Interacts directly with PALB2 which may serve as a scaffold for a HR complex containing PALB2, BRCA2, RAD51C, RAD51 and XRCC3.

The protein localises to the nucleus. It localises to the cytoplasm. It is found in the perinuclear region. The protein resides in the mitochondrion matrix. Its function is as follows. Involved in the homologous recombination repair (HRR) pathway of double-stranded DNA, thought to repair chromosomal fragmentation, translocations and deletions. Part of the RAD21 paralog protein complex CX3 which acts in the BRCA1-BRCA2-dependent HR pathway. Upon DNA damage, CX3 acts downstream of RAD51 recruitment; the complex binds predominantly to the intersection of the four duplex arms of the Holliday junction (HJ) and to junctions of replication forks. Involved in HJ resolution and thus in processing HR intermediates late in the DNA repair process; the function may be linked to the CX3 complex and seems to involve GEN1 during mitotic cell cycle progression. Part of a PALB2-scaffolded HR complex containing BRCA2 and RAD51C and which is thought to play a role in DNA repair by HR. Plays a role in regulating mitochondrial DNA copy number under conditions of oxidative stress in the presence of RAD51 and RAD51C. The polypeptide is DNA repair protein XRCC3 (Xrcc3) (Mus musculus (Mouse)).